Here is a 726-residue protein sequence, read N- to C-terminus: Sensory/regulatory protein RpfC (726 aa).

A run of 5 helical transmembrane segments spans residues 23-40, 52-72, 95-115, 128-148, and 152-172; these read NLIR…LGWR, TWLI…AILL, IMAI…WVTI, AATA…PYWK, and YLSW…DSLL. Positions 195–417 constitute a Histidine kinase domain; that stretch reads NMSHEFRTPL…VFWFELPMAI (223 aa). At histidine 198 the chain carries Phosphohistidine; by autocatalysis. The 119-residue stretch at 463–581 folds into the Response regulatory domain; it reads RMLVADDHEA…KLLDTLADLA (119 aa). Aspartate 512 carries the post-translational modification 4-aspartylphosphate. The HPt domain maps to 618–711; sequence GEEFERQFVR…KAGKDALDAR (94 aa). Histidine 657 is subject to Phosphohistidine.

As to quaternary structure, at low DSF concentrations, interacts with RpfF. Post-translationally, autophosphorylated. Activation may require a sequential transfer of a phosphate group from a His in the primary transmitter domain, to an Asp in the receiver domain and to a His in the secondary transmitter domain.

Its subcellular location is the cell inner membrane. It catalyses the reaction ATP + protein L-histidine = ADP + protein N-phospho-L-histidine.. With respect to regulation, binding of DSF to the sensor region causes allosteric change, which facilitates RpfC autophosphorylation. Hybrid sensor kinase that regulates diverse biological functions through two distinct molecular mechanisms. At low cell density, the extracellular concentration of the diffusible signaling factor (DSF) is below a threshold, and unphosphorylated RpfC is involved in the negative regulation of DSF synthesis, via direct interaction with the DSF synthase RpfF. Interaction prevents synthesis of DSF, which remains at a basal level. This activity does not involve the phosphorelay mechanism and is not dependent on RpfG. Is also member of the two-component regulatory system RpfG/RpfC, which is involved in the perception and response to DSF, which is essential for cell-cell signaling. At high cell density, the level of extracellular DSF increases and binding of DSF to the sensor region of RpfC causes autophosphorylation of RpfC, which results in the release of RpfF and the activation of RpfG via a four-step phosphorelay. Activation of RpfG leads to the positive regulation of biofilm dispersal and the production of virulence factors. This Xanthomonas campestris pv. campestris (strain ATCC 33913 / DSM 3586 / NCPPB 528 / LMG 568 / P 25) protein is Sensory/regulatory protein RpfC (rpfC).